Consider the following 951-residue polypeptide: Glycine dehydrogenase (decarboxylating) 1 (951 aa).

Lys-703 carries the post-translational modification N6-(pyridoxal phosphate)lysine.

This sequence belongs to the GcvP family. As to quaternary structure, the glycine cleavage system is composed of four proteins: P, T, L and H. Pyridoxal 5'-phosphate is required as a cofactor.

It catalyses the reaction N(6)-[(R)-lipoyl]-L-lysyl-[glycine-cleavage complex H protein] + glycine + H(+) = N(6)-[(R)-S(8)-aminomethyldihydrolipoyl]-L-lysyl-[glycine-cleavage complex H protein] + CO2. Its function is as follows. The glycine cleavage system catalyzes the degradation of glycine. The P protein binds the alpha-amino group of glycine through its pyridoxal phosphate cofactor; CO(2) is released and the remaining methylamine moiety is then transferred to the lipoamide cofactor of the H protein. The chain is Glycine dehydrogenase (decarboxylating) 1 (gcvP1) from Pseudomonas putida (strain ATCC 47054 / DSM 6125 / CFBP 8728 / NCIMB 11950 / KT2440).